Consider the following 265-residue polypeptide: Hydroxyethylthiazole kinase (265 aa).

A substrate-binding site is contributed by Met-50. 2 residues coordinate ATP: Arg-125 and Thr-171. Gly-198 is a binding site for substrate.

Belongs to the Thz kinase family. Mg(2+) is required as a cofactor.

It catalyses the reaction 5-(2-hydroxyethyl)-4-methylthiazole + ATP = 4-methyl-5-(2-phosphooxyethyl)-thiazole + ADP + H(+). It functions in the pathway cofactor biosynthesis; thiamine diphosphate biosynthesis; 4-methyl-5-(2-phosphoethyl)-thiazole from 5-(2-hydroxyethyl)-4-methylthiazole: step 1/1. Functionally, catalyzes the phosphorylation of the hydroxyl group of 4-methyl-5-beta-hydroxyethylthiazole (THZ). The protein is Hydroxyethylthiazole kinase of Salmonella choleraesuis (strain SC-B67).